The following is a 258-amino-acid chain: Probable splicing factor, arginine/serine-rich 3 (258 aa).

The RRM 1 domain maps to 9–83 (QKVYVGNLPG…RRIRVEFTRG (75 aa)). Disordered regions lie at residues 81–120 (TRGV…PQRR) and 190–258 (AYIR…PSPQ). Basic and acidic residues predominate over residues 97-107 (GGDHRGGDFRG). Over residues 108 to 117 (GRGGGRGGGP) the composition is skewed to gly residues. An RRM 2 domain is found at 123–197 (YRVIVEGLPP…ETAYIRVRED (75 aa)). Residues 208–223 (GRDRSRSRSPRAERRA) show a composition bias toward basic and acidic residues. Over residues 228-246 (SPRRSRSRSRSRSRSRSRS) the composition is skewed to basic residues. Positions 247-258 (ASRSPSRSPSPQ) are enriched in low complexity.

It belongs to the splicing factor SR family. Interacts with spk-1. Directly phosphorylated by spk-1 in vitro on serine residues of the RS domain. As to expression, predominantly coexpressed with spk-1 in adult hermaphrodite germlines.

It localises to the nucleus. In terms of biological role, plays an essential role in embryogenesis. The protein is Probable splicing factor, arginine/serine-rich 3 (rsp-3) of Caenorhabditis elegans.